The sequence spans 123 residues: Small ribosomal subunit protein uS13 (123 aa).

The interval 95–123 (GLPVRGQKTKTNARTRKGPKRTVGRKKKK) is disordered. The segment covering 101–123 (QKTKTNARTRKGPKRTVGRKKKK) has biased composition (basic residues).

Belongs to the universal ribosomal protein uS13 family. Part of the 30S ribosomal subunit. Forms a loose heterodimer with protein S19. Forms two bridges to the 50S subunit in the 70S ribosome.

In terms of biological role, located at the top of the head of the 30S subunit, it contacts several helices of the 16S rRNA. In the 70S ribosome it contacts the 23S rRNA (bridge B1a) and protein L5 of the 50S subunit (bridge B1b), connecting the 2 subunits; these bridges are implicated in subunit movement. Contacts the tRNAs in the A and P-sites. The polypeptide is Small ribosomal subunit protein uS13 (Alkaliphilus metalliredigens (strain QYMF)).